The chain runs to 332 residues: Phosphoribosylformylglycinamidine cyclo-ligase (332 aa).

Belongs to the AIR synthase family.

It localises to the cytoplasm. The enzyme catalyses 2-formamido-N(1)-(5-O-phospho-beta-D-ribosyl)acetamidine + ATP = 5-amino-1-(5-phospho-beta-D-ribosyl)imidazole + ADP + phosphate + H(+). It participates in purine metabolism; IMP biosynthesis via de novo pathway; 5-amino-1-(5-phospho-D-ribosyl)imidazole from N(2)-formyl-N(1)-(5-phospho-D-ribosyl)glycinamide: step 2/2. This Clostridium acetobutylicum (strain ATCC 824 / DSM 792 / JCM 1419 / IAM 19013 / LMG 5710 / NBRC 13948 / NRRL B-527 / VKM B-1787 / 2291 / W) protein is Phosphoribosylformylglycinamidine cyclo-ligase.